Reading from the N-terminus, the 204-residue chain is Protease (204 aa).

Catalysis depends on residues histidine 54, aspartate 71, and cysteine 121.

It belongs to the peptidase C5 family. In terms of assembly, interacts with protease cofactor pVI-C; this interaction is necessary for protease activation.

Its subcellular location is the virion. It is found in the host nucleus. The catalysed reaction is Cleaves proteins of the adenovirus and its host cell at two consensus sites: -Yaa-Xaa-Gly-Gly-|-Xaa- and -Yaa-Xaa-Gly-Xaa-|-Gly- (in which Yaa is Met, Ile or Leu, and Xaa is any amino acid).. Its activity is regulated as follows. Requires DNA and protease cofactor for maximal activation. Inside nascent virions, becomes partially activated by binding to the viral DNA, allowing it to cleave the cofactor that binds to the protease and fully activates it. Actin, like the viral protease cofactor, seems to act as a cofactor in the cleavage of cytokeratin 18 and of actin itself. In terms of biological role, cleaves viral precursor proteins (pTP, pIIIa, pVI, pVII, pVIII, and pX) inside newly assembled particles giving rise to mature virions. Protease complexed to its cofactor slides along the viral DNA to specifically locate and cleave the viral precursors. Mature virions have a weakened organization compared to the unmature virions, thereby facilitating subsequent uncoating. Without maturation, the particle lacks infectivity and is unable to uncoat. Late in adenovirus infection, in the cytoplasm, may participate in the cytoskeleton destruction. Cleaves host cell cytoskeletal keratins K7 and K18. The chain is Protease from Frog adenovirus 1 (strain ATCC VR-896) (FrAdV-1).